The primary structure comprises 336 residues: Putative bifunctional cytochrome c-type biogenesis protein CcmAE (336 aa).

The segment at 1–199 is cytochrome c biogenesis ATP-binding export protein CcmA 2; the sequence is MLEARDLYCE…ADTVRRLALT (199 aa). Positions 2 to 242 constitute an ABC transporter domain; sequence LEARDLYCER…VGQRLRVGGM (241 aa). An ATP-binding site is contributed by 34–41; the sequence is GGNGAGKT. The tract at residues 196 to 336 is cytochrome c-type biogenesis protein CcmE 2; the sequence is LALTTALVLY…PQRVDKDTSS (141 aa). Positions 307 and 311 each coordinate heme. The tract at residues 307 to 336 is disordered; the sequence is HDENYTPPEVEKAMQENHRRPQRVDKDTSS.

This sequence in the N-terminal section; belongs to the ABC transporter superfamily. CcmA exporter (TC 3.A.1.107) family. In the C-terminal section; belongs to the CcmE/CycJ family.

It localises to the cell inner membrane. It carries out the reaction heme b(in) + ATP + H2O = heme b(out) + ADP + phosphate + H(+). Part of the ABC transporter complex CcmAB involved in the biogenesis of c-type cytochromes; once thought to export heme, this seems not to be the case, but its exact role is uncertain. Responsible for energy coupling to the transport system. Functionally, heme chaperone required for the biogenesis of c-type cytochromes. Transiently binds heme delivered by CcmC and transfers the heme to apo-cytochromes in a process facilitated by CcmF and CcmH. The protein is Putative bifunctional cytochrome c-type biogenesis protein CcmAE (ccmAE) of Salmonella choleraesuis (strain SC-B67).